We begin with the raw amino-acid sequence, 904 residues long: Patched domain-containing protein 4 (904 aa).

Residues 41 to 61 (HPVFFLTVPAVLTITFGLSAL) traverse the membrane as a helical segment. Asn149 carries N-linked (GlcNAc...) asparagine glycosylation. In terms of domain architecture, SSD spans 291 to 450 (TRSKVLVSLV…FSFFGSCLVF (160 aa)). A run of 6 helical transmembrane segments spans residues 295 to 312 (VLVS…SSSM), 323 to 343 (GLLG…IFFI), 351 to 371 (TLLG…FELL), 394 to 414 (VMVT…MGAS), 431 to 451 (VSIL…LVFA), and 523 to 543 (PFVV…CLQI). The N-linked (GlcNAc...) asparagine glycan is linked to Asn625. A run of 3 helical transmembrane segments spans residues 718–738 (PVLI…FLVI), 744–764 (FWLI…MTLW), and 771–791 (ISIL…APLL). An N-linked (GlcNAc...) asparagine glycan is attached at Asn820. 2 helical membrane-spanning segments follow: residues 823–843 (SFLI…FTLF) and 845–865 (CLLL…PVFL).

The protein belongs to the patched family.

It localises to the membrane. Its function is as follows. Could act as a repressor of canonical hedgehog signaling by antagonizing the effects of SMO, as suggested by down-regulation of hedgehog target genes, including GLI1, PTCH1, and PTCH2 in PTCHD4-expressing cells. The chain is Patched domain-containing protein 4 (Ptchd4) from Mus musculus (Mouse).